We begin with the raw amino-acid sequence, 496 residues long: Probable cytosol aminopeptidase (496 aa).

Mn(2+) contacts are provided by Lys-262 and Asp-267. Lys-274 is a catalytic residue. Asp-285, Asp-344, and Glu-346 together coordinate Mn(2+). Arg-348 is an active-site residue.

Belongs to the peptidase M17 family. Requires Mn(2+) as cofactor.

Its subcellular location is the cytoplasm. It carries out the reaction Release of an N-terminal amino acid, Xaa-|-Yaa-, in which Xaa is preferably Leu, but may be other amino acids including Pro although not Arg or Lys, and Yaa may be Pro. Amino acid amides and methyl esters are also readily hydrolyzed, but rates on arylamides are exceedingly low.. The enzyme catalyses Release of an N-terminal amino acid, preferentially leucine, but not glutamic or aspartic acids.. In terms of biological role, presumably involved in the processing and regular turnover of intracellular proteins. Catalyzes the removal of unsubstituted N-terminal amino acids from various peptides. This chain is Probable cytosol aminopeptidase, found in Rhizobium etli (strain CIAT 652).